Here is a 736-residue protein sequence, read N- to C-terminus: DNA topoisomerase 1 (736 aa).

A Toprim domain is found at 2-113; sequence KHLIIVESPA…SYPRIVFHEI (112 aa). Glu8 and Asp82 together coordinate Mg(2+). Residues 129 to 552 enclose the Topo IA-type catalytic domain; the sequence is DMSKVNAQQA…DFYYPFMDKI (424 aa). The interaction with DNA stretch occupies residues 163 to 168; that stretch reads SAGRVQ. Tyr297 functions as the O-(5'-phospho-DNA)-tyrosine intermediate in the catalytic mechanism. C4-type zinc fingers lie at residues 572–598, 616–642, 663–689, and 702–725; these read CPKCGGELVKKNSRYGEFIACNNYPKC, CEKCGGEMVQKFSRNGAFLACNNYPEC, CPECGGDIALKRSKKGSFYGCNNYPKC, and CEKCHYLMSERIYRKKKAHECIKC.

It belongs to the type IA topoisomerase family. Monomer. Mg(2+) is required as a cofactor.

The catalysed reaction is ATP-independent breakage of single-stranded DNA, followed by passage and rejoining.. In terms of biological role, releases the supercoiling and torsional tension of DNA, which is introduced during the DNA replication and transcription, by transiently cleaving and rejoining one strand of the DNA duplex. Introduces a single-strand break via transesterification at a target site in duplex DNA. The scissile phosphodiester is attacked by the catalytic tyrosine of the enzyme, resulting in the formation of a DNA-(5'-phosphotyrosyl)-enzyme intermediate and the expulsion of a 3'-OH DNA strand. The free DNA strand then undergoes passage around the unbroken strand, thus removing DNA supercoils. Finally, in the religation step, the DNA 3'-OH attacks the covalent intermediate to expel the active-site tyrosine and restore the DNA phosphodiester backbone. The chain is DNA topoisomerase 1 from Helicobacter pylori (strain ATCC 700392 / 26695) (Campylobacter pylori).